The primary structure comprises 215 residues: Probable transaldolase (215 aa).

The active-site Schiff-base intermediate with substrate is Lys-83.

This sequence belongs to the transaldolase family. Type 3B subfamily.

It localises to the cytoplasm. The enzyme catalyses D-sedoheptulose 7-phosphate + D-glyceraldehyde 3-phosphate = D-erythrose 4-phosphate + beta-D-fructose 6-phosphate. It participates in carbohydrate degradation; pentose phosphate pathway; D-glyceraldehyde 3-phosphate and beta-D-fructose 6-phosphate from D-ribose 5-phosphate and D-xylulose 5-phosphate (non-oxidative stage): step 2/3. Transaldolase is important for the balance of metabolites in the pentose-phosphate pathway. The protein is Probable transaldolase of Desulforapulum autotrophicum (strain ATCC 43914 / DSM 3382 / VKM B-1955 / HRM2) (Desulfobacterium autotrophicum).